A 418-amino-acid chain; its full sequence is Serpin A9 (418 aa).

Residues 1–25 (MGSSSFYRVLLLVGFCAPIFCMLSS) form the signal peptide. Residues N103, N213, and N224 are each glycosylated (N-linked (GlcNAc...) asparagine).

It belongs to the serpin family.

It is found in the secreted. The sequence is that of Serpin A9 (Serpina9) from Mus musculus (Mouse).